A 300-amino-acid chain; its full sequence is Ribosomal protein L11 methyltransferase (300 aa).

Residues threonine 148, glycine 171, aspartate 193, and asparagine 235 each coordinate S-adenosyl-L-methionine.

This sequence belongs to the methyltransferase superfamily. PrmA family.

It is found in the cytoplasm. It catalyses the reaction L-lysyl-[protein] + 3 S-adenosyl-L-methionine = N(6),N(6),N(6)-trimethyl-L-lysyl-[protein] + 3 S-adenosyl-L-homocysteine + 3 H(+). Its function is as follows. Methylates ribosomal protein L11. The protein is Ribosomal protein L11 methyltransferase of Desulfotalea psychrophila (strain LSv54 / DSM 12343).